The following is an 844-amino-acid chain: Receptor-like protein 49 (844 aa).

The N-terminal stretch at 1-31 (MMYSCRERRMITVKWSLCLIFCLSNSILVFA) is a signal peptide. Topologically, residues 32 to 803 (KHLCLPDQRD…QDEEKEEEEQ (772 aa)) are extracellular. N-linked (GlcNAc...) asparagine glycans are attached at residues asparagine 59, asparagine 95, asparagine 112, and asparagine 159. LRR repeat units follow at residues 102 to 126 (QHLQ…GLKG), 136 to 160 (LKYL…LGNL), 161 to 183 (SYLT…SMGN), 185 to 208 (NYLR…LGNL), 209 to 231 (SYLA…SMGN), 242 to 265 (LNSL…NMSS), 266 to 290 (LSKL…LFMI), 292 to 313 (SLVE…NISS), 315 to 339 (SKLQ…IFSP), 345 to 362 (YLDV…VSLP), 363 to 385 (SPIE…LRNQ), 386 to 409 (TKLY…LWSL), 410 to 434 (PELQ…VIQG), 436 to 457 (GELY…LLPV), 458 to 481 (DSMN…ICEL), 482 to 504 (DNLV…CFEN), 506 to 527 (HLYV…EAIS), 528 to 551 (DRLQ…LINC), 553 to 574 (ALEF…WLEL), 575 to 601 (LPNF…SLSF), 602 to 625 (PRLR…YFAP), 665 to 689 (FTIY…ISLL), 690 to 713 (KELI…LSNL), 714 to 737 (SNLQ…LGEL), and 739 to 762 (FLAR…QIQT). Asparagine 207 is a glycosylation site (N-linked (GlcNAc...) asparagine). Asparagine 262 is a glycosylation site (N-linked (GlcNAc...) asparagine). N-linked (GlcNAc...) asparagine glycosylation is present at asparagine 310. Asparagine 374 and asparagine 384 each carry an N-linked (GlcNAc...) asparagine glycan. A glycan (N-linked (GlcNAc...) asparagine) is linked at asparagine 416. N-linked (GlcNAc...) asparagine glycosylation is found at asparagine 493, asparagine 516, and asparagine 550. Asparagine 696 and asparagine 712 each carry an N-linked (GlcNAc...) asparagine glycan. Asparagine 744 carries an N-linked (GlcNAc...) asparagine glycan. Residues 804–824 (VFSWIAAAIGYVPGVVCGLTI) form a helical membrane-spanning segment. Residues 825–844 (GHILVSHKRDWFMRIVSLFT) are Cytoplasmic-facing.

Belongs to the RLP family.

The protein localises to the cell membrane. The protein is Receptor-like protein 49 of Arabidopsis thaliana (Mouse-ear cress).